The chain runs to 167 residues: Phosphopantetheine adenylyltransferase (167 aa).

Substrate is bound at residue S9. Residues 9-10 (SF) and H17 each bind ATP. 3 residues coordinate substrate: K41, V78, and R92. Residues 93-95 (GLR), E103, and 128-134 (SRPITAT) each bind ATP.

This sequence belongs to the bacterial CoaD family. As to quaternary structure, homohexamer. Mg(2+) is required as a cofactor.

Its subcellular location is the cytoplasm. The enzyme catalyses (R)-4'-phosphopantetheine + ATP + H(+) = 3'-dephospho-CoA + diphosphate. Its pathway is cofactor biosynthesis; coenzyme A biosynthesis; CoA from (R)-pantothenate: step 4/5. Functionally, reversibly transfers an adenylyl group from ATP to 4'-phosphopantetheine, yielding dephospho-CoA (dPCoA) and pyrophosphate. The sequence is that of Phosphopantetheine adenylyltransferase from Rhizobium rhizogenes (strain K84 / ATCC BAA-868) (Agrobacterium radiobacter).